Reading from the N-terminus, the 219-residue chain is Octanoyltransferase (219 aa).

Residues 24–212 (KFRRECILFL…NLNSFLGPIS (189 aa)) enclose the BPL/LPL catalytic domain. Residues 69-76 (RGGDFTAH), 140-142 (SIG), and 153-155 (GVA) each bind substrate. Residue C171 is the Acyl-thioester intermediate of the active site.

Belongs to the LipB family.

Its subcellular location is the cytoplasm. It catalyses the reaction octanoyl-[ACP] + L-lysyl-[protein] = N(6)-octanoyl-L-lysyl-[protein] + holo-[ACP] + H(+). It participates in protein modification; protein lipoylation via endogenous pathway; protein N(6)-(lipoyl)lysine from octanoyl-[acyl-carrier-protein]: step 1/2. In terms of biological role, catalyzes the transfer of endogenously produced octanoic acid from octanoyl-acyl-carrier-protein onto the lipoyl domains of lipoate-dependent enzymes. Lipoyl-ACP can also act as a substrate although octanoyl-ACP is likely to be the physiological substrate. This is Octanoyltransferase from Leptospira borgpetersenii serovar Hardjo-bovis (strain JB197).